The chain runs to 118 residues: MPTIKQLIRNTRQPIRNVTKSPALRGCPQRRGTCTRVYTITPKKPNSALRKVARVRLTSGFEITAYIPGIGHNSQEHSVVLVRGGRVKDLPGVRYHIVRGTLDAVGVKDRQQGRSSAL.

It belongs to the universal ribosomal protein uS12 family. Part of the 30S ribosomal subunit.

It localises to the plastid. It is found in the chloroplast. With S4 and S5 plays an important role in translational accuracy. Located at the interface of the 30S and 50S subunits. The protein is Small ribosomal subunit protein uS12cz/uS12cy (rps12-A) of Helianthus annuus (Common sunflower).